A 227-amino-acid chain; its full sequence is Phosphoribosylformylglycinamidine synthase subunit PurQ (227 aa).

A Glutamine amidotransferase type-1 domain is found at 3–225; sequence FAVIVFPGSN…VKQGAHHVKT (223 aa). The active-site Nucleophile is Cys86. Catalysis depends on residues His194 and Glu196.

As to quaternary structure, part of the FGAM synthase complex composed of 1 PurL, 1 PurQ and 2 PurS subunits.

It localises to the cytoplasm. The catalysed reaction is N(2)-formyl-N(1)-(5-phospho-beta-D-ribosyl)glycinamide + L-glutamine + ATP + H2O = 2-formamido-N(1)-(5-O-phospho-beta-D-ribosyl)acetamidine + L-glutamate + ADP + phosphate + H(+). It carries out the reaction L-glutamine + H2O = L-glutamate + NH4(+). It functions in the pathway purine metabolism; IMP biosynthesis via de novo pathway; 5-amino-1-(5-phospho-D-ribosyl)imidazole from N(2)-formyl-N(1)-(5-phospho-D-ribosyl)glycinamide: step 1/2. Part of the phosphoribosylformylglycinamidine synthase complex involved in the purines biosynthetic pathway. Catalyzes the ATP-dependent conversion of formylglycinamide ribonucleotide (FGAR) and glutamine to yield formylglycinamidine ribonucleotide (FGAM) and glutamate. The FGAM synthase complex is composed of three subunits. PurQ produces an ammonia molecule by converting glutamine to glutamate. PurL transfers the ammonia molecule to FGAR to form FGAM in an ATP-dependent manner. PurS interacts with PurQ and PurL and is thought to assist in the transfer of the ammonia molecule from PurQ to PurL. This is Phosphoribosylformylglycinamidine synthase subunit PurQ from Exiguobacterium sibiricum (strain DSM 17290 / CCUG 55495 / CIP 109462 / JCM 13490 / 255-15).